Reading from the N-terminus, the 585-residue chain is Arginine--tRNA ligase (585 aa).

Positions 130-140 match the 'HIGH' region motif; sequence ANPTGPMHVGH.

The protein belongs to the class-I aminoacyl-tRNA synthetase family. As to quaternary structure, monomer.

It localises to the cytoplasm. The catalysed reaction is tRNA(Arg) + L-arginine + ATP = L-arginyl-tRNA(Arg) + AMP + diphosphate. This Methylorubrum extorquens (strain CM4 / NCIMB 13688) (Methylobacterium extorquens) protein is Arginine--tRNA ligase.